The chain runs to 288 residues: tRNA pseudouridine synthase A (288 aa).

The active-site Nucleophile is the Asp-58. Tyr-124 serves as a coordination point for substrate.

The protein belongs to the tRNA pseudouridine synthase TruA family. Homodimer.

It carries out the reaction uridine(38/39/40) in tRNA = pseudouridine(38/39/40) in tRNA. Functionally, formation of pseudouridine at positions 38, 39 and 40 in the anticodon stem and loop of transfer RNAs. The polypeptide is tRNA pseudouridine synthase A (Corynebacterium diphtheriae (strain ATCC 700971 / NCTC 13129 / Biotype gravis)).